Reading from the N-terminus, the 170-residue chain is Probable inosine/xanthosine triphosphatase (170 aa).

Residue 7–12 (TTNPVK) coordinates substrate. Residue D37 coordinates Mg(2+).

Belongs to the YjjX NTPase family. Homodimer. It depends on Mg(2+) as a cofactor. Requires Mn(2+) as cofactor.

It carries out the reaction XTP + H2O = XDP + phosphate + H(+). The enzyme catalyses ITP + H2O = IDP + phosphate + H(+). In terms of biological role, phosphatase that hydrolyzes non-canonical purine nucleotides such as XTP and ITP to their respective diphosphate derivatives. Probably excludes non-canonical purines from DNA/RNA precursor pool, thus preventing their incorporation into DNA/RNA and avoiding chromosomal lesions. The sequence is that of Probable inosine/xanthosine triphosphatase from Methanopyrus kandleri (strain AV19 / DSM 6324 / JCM 9639 / NBRC 100938).